We begin with the raw amino-acid sequence, 105 residues long: Large ribosomal subunit protein bL21 (105 aa).

It belongs to the bacterial ribosomal protein bL21 family. As to quaternary structure, part of the 50S ribosomal subunit. Contacts protein L20.

In terms of biological role, this protein binds to 23S rRNA in the presence of protein L20. This chain is Large ribosomal subunit protein bL21, found in Rhizobium johnstonii (strain DSM 114642 / LMG 32736 / 3841) (Rhizobium leguminosarum bv. viciae).